Consider the following 81-residue polypeptide: Small ribosomal subunit protein bS16 (81 aa).

It belongs to the bacterial ribosomal protein bS16 family.

The polypeptide is Small ribosomal subunit protein bS16 (Acetivibrio thermocellus (strain ATCC 27405 / DSM 1237 / JCM 9322 / NBRC 103400 / NCIMB 10682 / NRRL B-4536 / VPI 7372) (Clostridium thermocellum)).